Here is a 210-residue protein sequence, read N- to C-terminus: ATP-dependent Clp protease proteolytic subunit (210 aa).

S106 (nucleophile) is an active-site residue. H131 is a catalytic residue.

This sequence belongs to the peptidase S14 family. Fourteen ClpP subunits assemble into 2 heptameric rings which stack back to back to give a disk-like structure with a central cavity, resembling the structure of eukaryotic proteasomes.

Its subcellular location is the cytoplasm. It carries out the reaction Hydrolysis of proteins to small peptides in the presence of ATP and magnesium. alpha-casein is the usual test substrate. In the absence of ATP, only oligopeptides shorter than five residues are hydrolyzed (such as succinyl-Leu-Tyr-|-NHMec, and Leu-Tyr-Leu-|-Tyr-Trp, in which cleavage of the -Tyr-|-Leu- and -Tyr-|-Trp bonds also occurs).. Cleaves peptides in various proteins in a process that requires ATP hydrolysis. Has a chymotrypsin-like activity. Plays a major role in the degradation of misfolded proteins. The sequence is that of ATP-dependent Clp protease proteolytic subunit from Rhodopseudomonas palustris (strain BisB18).